The following is a 512-amino-acid chain: Bestrophin-2 (512 aa).

Over 1–31 the chain is Cytoplasmic; sequence MTVTYTARVAKARFGGFSKLLLLWRGSIYKL. Residue Ala10 coordinates Ca(2+). A helical membrane pass occupies residues 32–51; that stretch reads LWRELLCFLGLFMALSAAYR. Topologically, residues 52–60 are extracellular; it reads FVLTEEQKR. A helical transmembrane segment spans residues 61 to 82; that stretch reads YFEKLVLYCDRYASLIPVSFVL. The Cytoplasmic portion of the chain corresponds to 83 to 238; that stretch reads GFYVTLVVHR…WISVPLVYTQ (156 aa). The helical transmembrane segment at 239-255 threads the bilayer; that stretch reads VVTIAVYSYFLACLIGR. Over 256–274 the chain is Extracellular; sequence QFLDPAQGYKDHDLDLCVP. A helical membrane pass occupies residues 275-288; that stretch reads IFTLLQFFFYAGWL. Residues 289-512 lie on the Cytoplasmic side of the membrane; sequence KVAEQLINPF…PIGEEEESLA (224 aa). Ca(2+)-binding residues include Gln293, Asn296, Asp301, and Asp304. Residues 453 to 512 form a disordered region; that stretch reads VDLGQPEPESEPITGPESPALVPAPRAPSEPLTVVPLSGTRGPAPPWLPSPIGEEEESLA.

It belongs to the anion channel-forming bestrophin (TC 1.A.46) family. Calcium-sensitive chloride channel subfamily. In terms of assembly, pentamer. Interacts with GLUL; this interaction tethers a fraction of GLUL to the membrane, causing a decrease of cytosolic glutamine synthase (GS) activity and inhibits the chloride channel activity of BEST2 by affecting the gating at the aperture in the absence of intracellular glutamate.

The protein resides in the cell membrane. It is found in the basolateral cell membrane. It catalyses the reaction chloride(in) = chloride(out). The catalysed reaction is iodide(out) = iodide(in). It carries out the reaction hydrogencarbonate(in) = hydrogencarbonate(out). The enzyme catalyses L-glutamate(out) = L-glutamate(in). It catalyses the reaction L-glutamine(out) = L-glutamine(in). Its activity is regulated as follows. Chloride channel activity is allosterically inhibited by GLUL/glutamine synthase (GS) which affects the gating at the aperture in the absence of intracellular glutamate. Inhibitory effect of GLUL is relieved upon increasing of intracellular level of L-glutamate. In terms of biological role, ligand-gated anion channel that allows the movement of anions across cell membranes when activated by calcium (Ca2+). Transports a large specter of anions, namely mediates the movement of chloride, L-glutamate and iodide. Calcium-binding triggers the dilation of the aperture, but calcium-dependent gating is only effective when the size of the passing anion is bigger than the closed aperture. Mediates the calcium-activated hydrogencarbonate movement and participates in colonic hydrogencarbonate secretion concomitant with mucin secretion. In non-pigmented epithelium (NPE), mediates the efflux of intracellular L-glutamate; binding of intracellular L-glutamate activates and open both the neck and the aperture of the channel, leading to L-glutamate exit promoting chloride influx movement from the extracellular side in trans. Also exhibits a directional permeability for intracellular glutamine, in a similar manner as for L-glutamate. This is Bestrophin-2 from Bos taurus (Bovine).